The following is a 344-amino-acid chain: MIELQGLSQRFPGASGDVHALRDVSLSIAAGEVFGIIGRSGAGKSTLVRAINLLNRPSSGRVIVAGQELTALDTGALRLARREIGMIFQHFNLLSSRTVYENVALPLELAGKPKAEIAATVLPLLDLVGLSALKGRYPAQISGGQKQRVGIARALASKPKVLLSDEATSALDPETTRSILELLKQINRDLGLTIVMITHQMEVIKQVCDRVAVLEAGRVVETGRVIDVFLRPQHDVTRAMIGDVISQELPASVLKRVESRLGNGRDHVYRLAFTGEGVDQPVLAQAIRRYGLDFNILHGHIDEIQGQAFGSLAIMATGELADVKAAMEYLQAQGVVVEEFEHVV.

One can recognise an ABC transporter domain in the interval 2–241; sequence IELQGLSQRF…PQHDVTRAMI (240 aa). ATP is bound at residue 38–45; it reads GRSGAGKS.

This sequence belongs to the ABC transporter superfamily. Methionine importer (TC 3.A.1.24) family. The complex is composed of two ATP-binding proteins (MetN), two transmembrane proteins (MetI) and a solute-binding protein (MetQ).

It localises to the cell inner membrane. It carries out the reaction L-methionine(out) + ATP + H2O = L-methionine(in) + ADP + phosphate + H(+). It catalyses the reaction D-methionine(out) + ATP + H2O = D-methionine(in) + ADP + phosphate + H(+). Part of the ABC transporter complex MetNIQ involved in methionine import. Responsible for energy coupling to the transport system. This is Methionine import ATP-binding protein MetN from Cupriavidus necator (strain ATCC 17699 / DSM 428 / KCTC 22496 / NCIMB 10442 / H16 / Stanier 337) (Ralstonia eutropha).